Reading from the N-terminus, the 410-residue chain is Protein CNPPD1 (410 aa).

The helical transmembrane segment at 233–253 threads the bilayer; it reads CLLAVAYVSSVALAVASVAVI.

This sequence belongs to the CNPPD1 family.

Its subcellular location is the membrane. The sequence is that of Protein CNPPD1 (CNPPD1) from Pongo abelii (Sumatran orangutan).